The following is a 319-amino-acid chain: Thioredoxin reductase (319 aa).

FAD-binding positions include 11-14 (SGPA), 40-41 (VA), Gln45, Asn54, Val87, Cys145, Asp288, and 295-297 (RQA). Cys142 and Cys145 are joined by a disulfide.

The protein belongs to the class-II pyridine nucleotide-disulfide oxidoreductase family. As to quaternary structure, homodimer. The cofactor is FAD.

It is found in the cytoplasm. It carries out the reaction [thioredoxin]-dithiol + NADP(+) = [thioredoxin]-disulfide + NADPH + H(+). The protein is Thioredoxin reductase (TRR1) of Eremothecium gossypii (strain ATCC 10895 / CBS 109.51 / FGSC 9923 / NRRL Y-1056) (Yeast).